We begin with the raw amino-acid sequence, 464 residues long: ATP synthase subunit beta (464 aa).

Residue 153 to 160 (GGAGVGKT) coordinates ATP.

This sequence belongs to the ATPase alpha/beta chains family. As to quaternary structure, F-type ATPases have 2 components, CF(1) - the catalytic core - and CF(0) - the membrane proton channel. CF(1) has five subunits: alpha(3), beta(3), gamma(1), delta(1), epsilon(1). CF(0) has three main subunits: a(1), b(2) and c(9-12). The alpha and beta chains form an alternating ring which encloses part of the gamma chain. CF(1) is attached to CF(0) by a central stalk formed by the gamma and epsilon chains, while a peripheral stalk is formed by the delta and b chains.

Its subcellular location is the cell inner membrane. The catalysed reaction is ATP + H2O + 4 H(+)(in) = ADP + phosphate + 5 H(+)(out). Functionally, produces ATP from ADP in the presence of a proton gradient across the membrane. The catalytic sites are hosted primarily by the beta subunits. This Burkholderia ambifaria (strain ATCC BAA-244 / DSM 16087 / CCUG 44356 / LMG 19182 / AMMD) (Burkholderia cepacia (strain AMMD)) protein is ATP synthase subunit beta.